The sequence spans 61 residues: Metallothionein-1M (61 aa).

The interval 1–29 (MDPNCSCTTGVSCACTGSCTCKECKCTSC) is beta. Residues cysteine 5, cysteine 7, cysteine 13, cysteine 15, cysteine 19, cysteine 21, cysteine 24, cysteine 26, cysteine 29, cysteine 33, cysteine 34, cysteine 36, cysteine 37, cysteine 41, cysteine 44, cysteine 48, cysteine 50, cysteine 57, cysteine 59, and cysteine 60 each contribute to the a divalent metal cation site. The tract at residues 30–61 (KKSCCSCCPVGCAKCAHGCVCKGTLENCSCCA) is alpha.

Belongs to the metallothionein superfamily. Type 1 family. Monomer.

Metallothioneins have a high content of cysteine residues that bind various heavy metals; these proteins are transcriptionally regulated by both heavy metals and glucocorticoids. This is Metallothionein-1M (MT1M) from Homo sapiens (Human).